The primary structure comprises 93 residues: MASGQQERSQLDRKAREGETVVPGGTGGKSLEAQENLAEGRSRGGQTRREQMGEEGYSQMGRKGGLSTNDESGGDRAAREGIDIDESKFKTKS.

The tract at residues 1 to 93 (MASGQQERSQ…IDESKFKTKS (93 aa)) is disordered. Basic and acidic residues-rich tracts occupy residues 9-19 (SQLDRKAREGE), 38-52 (AEGRSRGGQTRREQM), and 73-93 (GGDRAAREGIDIDESKFKTKS).

It belongs to the small hydrophilic plant seed protein family.

In terms of biological role, it is thought to provide protection for the cytoplasm during the desiccation stage of embryo development. This is Em protein (EM) from Triticum aestivum (Wheat).